Reading from the N-terminus, the 379-residue chain is Flagellin A (379 aa).

Coiled coils occupy residues 103–128 (TNSA…RIAE) and 302–341 (YVDS…IKDT).

It belongs to the bacterial flagellin family. In terms of assembly, heteromer of multiple flagellin subunits including FlaA, FlaB, FlaC, FlaD and possibly FlaE.

The protein resides in the secreted. It is found in the bacterial flagellum. Its function is as follows. Flagellin is the subunit protein which polymerizes to form the filaments of bacterial flagella. FlaA is essential for flagellar synthesis and full motility. Important for virulence at two different levels: is needed for crossing the fish integument and may play a role once the bacterium has entered the host. The sequence is that of Flagellin A (flaA) from Vibrio anguillarum (Listonella anguillarum).